Consider the following 510-residue polypeptide: Mitochondrial metal transporter 1 (510 aa).

A disordered region spans residues 120 to 141; the sequence is ADKPSSLNLHSHTHSHGHTHSH. The span at 130–141 shows a compositional bias: basic residues; that stretch reads SHTHSHGHTHSH. 6 helical membrane-spanning segments follow: residues 165–185, 194–214, 241–261, 286–306, 333–353, and 356–376; these read WVGLGVNVGIAIGKFFGGIVF, AIHAISDMVSDLLTLLSVGLA, LAMAGISIGWSSLCALVGPVI, VTDINAAWIAAASIAAKEWIF, LTSLVALVAISTGYLVNIQSL, and IGGLIVSGLIIKAGGEGMCIA.

Belongs to the cation diffusion facilitator (CDF) transporter (TC 2.A.4) family. SLC30A subfamily.

It localises to the mitochondrion membrane. Mitochondrial metal transporter involved in mitochondrial iron accumulation. The polypeptide is Mitochondrial metal transporter 1 (MMT1) (Saccharomyces cerevisiae (strain ATCC 204508 / S288c) (Baker's yeast)).